Consider the following 335-residue polypeptide: MLLIGVAGTTLSAQEVDWLQDDAVAGVVLFKRNFASRAQIVELSAALREAAPRPLLLAVDQEGGRVQRFYEGYSALPPLQGIGALYVRDPEAALELAFEHAWLMASEVRASGVDLSFAPVVDLGRGNRAIGDRAFSDDPHVVAAFAQAYVQGMHAAGMPVTLKHFPGHGSVLEDTHVDLAVDVRPLETLESEDLVPFAAGIAAGADAVMMAHVVYPNVAPETAGFSAHWIEVILRGRMGFRGVVFSDDIGMAAVRGVGGVVGCVHAHLDAGCDVVLVCHPELVNDALSAVAGRRSNTAALIGLIGRGALGWDGLLADVRYGSIQSRLFERFGTST.

Substrate contacts are provided by residues Asp-60, Arg-68, Arg-133, and 163-164 (KH). The Proton donor/acceptor role is filled by His-176. Residue Asp-247 is the Nucleophile of the active site.

It belongs to the glycosyl hydrolase 3 family. NagZ subfamily.

The protein localises to the cytoplasm. The enzyme catalyses Hydrolysis of terminal non-reducing N-acetyl-D-hexosamine residues in N-acetyl-beta-D-hexosaminides.. The protein operates within cell wall biogenesis; peptidoglycan recycling. Its function is as follows. Plays a role in peptidoglycan recycling by cleaving the terminal beta-1,4-linked N-acetylglucosamine (GlcNAc) from peptide-linked peptidoglycan fragments, giving rise to free GlcNAc, anhydro-N-acetylmuramic acid and anhydro-N-acetylmuramic acid-linked peptides. The chain is Beta-hexosaminidase from Xylella fastidiosa (strain M12).